A 376-amino-acid chain; its full sequence is Succinyl-diaminopimelate desuccinylase (376 aa).

Histidine 67 serves as a coordination point for Zn(2+). Aspartate 69 is an active-site residue. Aspartate 100 is a binding site for Zn(2+). Residue glutamate 134 is the Proton acceptor of the active site. Residues glutamate 135, glutamate 163, and histidine 349 each contribute to the Zn(2+) site.

It belongs to the peptidase M20A family. DapE subfamily. In terms of assembly, homodimer. Zn(2+) serves as cofactor. The cofactor is Co(2+).

The enzyme catalyses N-succinyl-(2S,6S)-2,6-diaminopimelate + H2O = (2S,6S)-2,6-diaminopimelate + succinate. It participates in amino-acid biosynthesis; L-lysine biosynthesis via DAP pathway; LL-2,6-diaminopimelate from (S)-tetrahydrodipicolinate (succinylase route): step 3/3. Functionally, catalyzes the hydrolysis of N-succinyl-L,L-diaminopimelic acid (SDAP), forming succinate and LL-2,6-diaminopimelate (DAP), an intermediate involved in the bacterial biosynthesis of lysine and meso-diaminopimelic acid, an essential component of bacterial cell walls. This chain is Succinyl-diaminopimelate desuccinylase, found in Idiomarina loihiensis (strain ATCC BAA-735 / DSM 15497 / L2-TR).